We begin with the raw amino-acid sequence, 373 residues long: Probable G-protein coupled receptor 173 (373 aa).

Over 1–26 (MANTTGEPEEVSGALSPPSASAYVKL) the chain is Extracellular. Residue N3 is glycosylated (N-linked (GlcNAc...) asparagine). A helical membrane pass occupies residues 27–47 (VLLGLIMCVSLAGNAILSLLV). Over 48-59 (LKERALHKAPYY) the chain is Cytoplasmic. Residues 60–80 (FLLDLCLADGIRSAVCFPFVL) form a helical membrane-spanning segment. At 81-97 (ASVRHGSSWTFSALSCK) the chain is on the extracellular side. Residues C96 and C174 are joined by a disulfide bond. The chain crosses the membrane as a helical span at residues 98–118 (IVAFMAVLFCFHAAFMLFCIS). Residues 119–139 (VTRYMAIAHHRFYAKRMTLWT) are Cytoplasmic-facing. Residues 140–160 (CAAVICMAWTLSVAMAFPPVF) traverse the membrane as a helical segment. At 161–188 (DVGTYKFIREEDQCIFEHRYFKANDTLG) the chain is on the extracellular side. An N-linked (GlcNAc...) asparagine glycan is attached at N184. A helical membrane pass occupies residues 189–209 (FMLMLAVLMAATHAVYGKLLL). The Cytoplasmic portion of the chain corresponds to 210 to 287 (FEYRHRKMKP…VKGEKQLGRM (78 aa)). Residues 288 to 308 (FYAITLLFLLLWSPYIVACYW) traverse the membrane as a helical segment. Residues 309 to 322 (RVFVKACAVPHRYL) lie on the Extracellular side of the membrane. Residues 323-343 (ATAVWMSFAQAAVNPIVCFLL) form a helical membrane-spanning segment. Residues 344–373 (NKDLKKCLRTHAPCWGTGGAPAPREPYCVM) are Cytoplasmic-facing.

It belongs to the G-protein coupled receptor 1 family. In terms of tissue distribution, expressed in the ovary, specifically in granulosa cells of follicles that have passed the primary stage and in oocytes (at protein level). Expressed at high levels in brain. Lower levels in small intestine. In brain regions, detected in all regions tested. Highest levels in the cerebellum and cerebral cortex.

Its subcellular location is the cell membrane. In terms of biological role, is a receptor for the SMIM20 derived peptides Phoenixin-14 and Phoenixin-20. It mediates the Phoenixin-14 and Phoenixin-20 augmentation of gonadotropin-releasing hormone (GNRH) signaling in the hypothalamus and pituitary gland. In the ovary, it mediates the effects of Phoenixin-14 and Phoenixin-20 induced granulosa cell proliferation during follicular growth. The sequence is that of Probable G-protein coupled receptor 173 (GPR173) from Homo sapiens (Human).